We begin with the raw amino-acid sequence, 253 residues long: Phosphate import ATP-binding protein PstB (253 aa).

The ABC transporter domain occupies 5-248 (IQVRDLNAYY…PSDKRTEDYI (244 aa)). 37–44 (GPSGCGKS) contributes to the ATP binding site.

It belongs to the ABC transporter superfamily. Phosphate importer (TC 3.A.1.7) family. As to quaternary structure, the complex is composed of two ATP-binding proteins (PstB), two transmembrane proteins (PstC and PstA) and a solute-binding protein (PstS).

The protein resides in the cell inner membrane. The catalysed reaction is phosphate(out) + ATP + H2O = ADP + 2 phosphate(in) + H(+). In terms of biological role, part of the ABC transporter complex PstSACB involved in phosphate import. Responsible for energy coupling to the transport system. In Koribacter versatilis (strain Ellin345), this protein is Phosphate import ATP-binding protein PstB.